The primary structure comprises 203 residues: Ras-related protein Rab-30 (203 aa).

Residues valine 20, glycine 21, lysine 22, threonine 23, cysteine 24, and threonine 41 each contribute to the GTP site. Threonine 23 provides a ligand contact to Mg(2+). Residues 36–44 (PGQGATIGV) are switch-I. Residues threonine 41 and aspartate 64 each coordinate Mg(2+). GTP-binding residues include glycine 67, asparagine 122, lysine 123, aspartate 125, alanine 153, and lysine 154. The switch-II stretch occupies residues 67–83 (GQERFRSITQSYYRSAN). Residues cysteine 199 and cysteine 200 are each lipidated (S-geranylgeranyl cysteine). Cysteine 200 carries the cysteine methyl ester modification. Residues 201–203 (NFN) constitute a propeptide, removed in mature form.

It belongs to the small GTPase superfamily. Rab family. Requires Mg(2+) as cofactor.

The protein resides in the membrane. It localises to the golgi apparatus. It is found in the trans-Golgi network membrane. The protein localises to the cis-Golgi network membrane. Its subcellular location is the golgi apparatus membrane. The protein resides in the cytoplasm. It localises to the cytoplasmic vesicle. It is found in the autophagosome membrane. The protein localises to the autolysosome membrane. The enzyme catalyses GTP + H2O = GDP + phosphate + H(+). Regulated by guanine nucleotide exchange factors (GEFs) which promote the exchange of bound GDP for free GTP. Regulated by GTPase activating proteins (GAPs) which increase the GTP hydrolysis activity. Inhibited by GDP dissociation inhibitors (GDIs). In terms of biological role, the small GTPases Rab are key regulators of intracellular membrane trafficking, from the formation of transport vesicles to their fusion with membranes. Rabs cycle between an inactive GDP-bound form and an active GTP-bound form that is able to recruit to membranes different sets of downstream effectors directly responsible for vesicle formation, movement, tethering and fusion. RAB30 is required for maintaining the structural integrity of the Golgi apparatus, possibly by mediating interactions with cytoplasmic scaffolding proteins. Facilitates lipid homeostasis during fasting by regulating hepatic protein and lipid trafficking in a PPAR-alpha-dependent manner. Promotes autophagosome biogenesis during bacterial infection such as group A Streptococcus infection. The protein is Ras-related protein Rab-30 (RAB30) of Bos taurus (Bovine).